The primary structure comprises 497 residues: MALLNRDDWYDIARDVDWTLSYVDRAVAFPEEWKGEKDICGTAWDDWDEPFRVSFREYVMVQRDKEASVGAIREAMVRAKAYEKLDDGHKATSHLHMGTITMVEHMAVTMQSRFVRFAPSARWRSLGAFGMLDETRHTQLDLRFSHDLLNDSPSFDWSQRAFHTDEWAVLATRNLFDDIMLNADCVEAALATSLTLEHGFTNIQFVALASDAMEAGDVNFSNLLSSIQTDEARHAQLGFPTLDVMMKHDPKRAQQILDVAFWRSYRIFQAVTGVSMDYYTPVAKRQMSFKEFMLEWIVKHHERILRDYGLQKPWYWDTFEKTLDHGHHALHIGTWFWRPTLFWDPNGGVSREERRWLNQKYPNWEESWGVLWDEIISNINAGNIEKTLPETLPMLCNVTNLPIGSHWDRFHLKPEQLVYKGRLYTFDSDVSKWIFELDPERYAGHTNVVDRFIGGQIQPMTIEGVLNWMGLTPEVMGKDVFNYRWAGDYAENRIAAE.

Fe cation is bound by residues Glu104, Glu134, His137, Glu197, Glu231, and His234.

Belongs to the TmoA/XamoA family. In terms of assembly, the alkene monooxygenase multicomponent enzyme system is composed of an electron transfer component and a monooxygenase component interacting with the effector protein XamoD. The electron transfer component is composed of a ferredoxin reductase (XamoF) and a ferredoxin (XamoC), and the monooxygenase component is formed by a heterohexamer (dimer of heterotrimers) of two alpha subunits (XamoA), two beta subunits (XamoE) and two gamma subunits (XamoB). Fe(2+) serves as cofactor.

The protein resides in the cytoplasm. It catalyses the reaction propene + NADH + O2 + H(+) = 1,2-epoxypropane + NAD(+) + H2O. With respect to regulation, inhibited by propyne. Component of the alkene monooxygenase multicomponent enzyme system which catalyzes the O2- and NADH-dependent epoxidation of short chain (C2 to C6) alkenes to their corresponding epoxides. Also able to catalyze the oxidation of a number of chlorinated alkenes, including trichloroethylene, cis- and trans-1,2-dichloroethylene, vinyl chloride, 1-chloropropylene, 1,3-dichloropropylene and 2,3-dichloropropylene. The polypeptide is Alkene monooxygenase system, oxygenase component subunit alpha (Xanthobacter autotrophicus (strain ATCC BAA-1158 / Py2)).